Consider the following 344-residue polypeptide: Selenide, water dikinase (344 aa).

Cys-16 is a catalytic residue. Residues Lys-19 and 47–49 (SRD) each bind ATP. Asp-50 serves as a coordination point for Mg(2+). ATP-binding positions include Asp-67, Asp-90, and 138 to 140 (GHS). Asp-90 contacts Mg(2+). Residue Asp-226 participates in Mg(2+) binding.

Belongs to the selenophosphate synthase 1 family. Class I subfamily. In terms of assembly, homodimer. Requires Mg(2+) as cofactor.

It catalyses the reaction hydrogenselenide + ATP + H2O = selenophosphate + AMP + phosphate + 2 H(+). In terms of biological role, synthesizes selenophosphate from selenide and ATP. The sequence is that of Selenide, water dikinase from Pseudomonas aeruginosa (strain ATCC 15692 / DSM 22644 / CIP 104116 / JCM 14847 / LMG 12228 / 1C / PRS 101 / PAO1).